Reading from the N-terminus, the 62-residue chain is Photosystem II reaction center protein Z (62 aa).

Transmembrane regions (helical) follow at residues 8–28 (LVVA…ITLS) and 41–61 (VTAS…NSFV).

This sequence belongs to the PsbZ family. As to quaternary structure, PSII is composed of 1 copy each of membrane proteins PsbA, PsbB, PsbC, PsbD, PsbE, PsbF, PsbH, PsbI, PsbJ, PsbK, PsbL, PsbM, PsbT, PsbX, PsbY, PsbZ, Psb30/Ycf12, at least 3 peripheral proteins of the oxygen-evolving complex and a large number of cofactors. It forms dimeric complexes.

The protein resides in the plastid. It is found in the chloroplast thylakoid membrane. Functionally, may control the interaction of photosystem II (PSII) cores with the light-harvesting antenna, regulates electron flow through the 2 photosystem reaction centers. PSII is a light-driven water plastoquinone oxidoreductase, using light energy to abstract electrons from H(2)O, generating a proton gradient subsequently used for ATP formation. This Cyanidioschyzon merolae (strain NIES-3377 / 10D) (Unicellular red alga) protein is Photosystem II reaction center protein Z.